The following is a 348-amino-acid chain: D-alanine--D-alanine ligase (348 aa).

An ATP-grasp domain is found at 132–334 (KRVLESIGIP…YPDLIEELVT (203 aa)). 162 to 217 (LARLTFPIFVKPANMGSSVGISKAQTKVELRKAIQLALTYDSRVLIEQGVVAREIE) provides a ligand contact to ATP. Mg(2+) contacts are provided by D288, E301, and N303.

This sequence belongs to the D-alanine--D-alanine ligase family. Requires Mg(2+) as cofactor. Mn(2+) is required as a cofactor.

It is found in the cytoplasm. It catalyses the reaction 2 D-alanine + ATP = D-alanyl-D-alanine + ADP + phosphate + H(+). The protein operates within cell wall biogenesis; peptidoglycan biosynthesis. Cell wall formation. This Streptococcus pyogenes serotype M3 (strain SSI-1) protein is D-alanine--D-alanine ligase.